Consider the following 2995-residue polypeptide: MRKVTEEKRHSSSMNSSTVETSFIAAPPVFLRKLKWAAVAAGCDVRLRVCVGGNPRPTLHWYHNDDPLVIDHEDYDGLWIRDCQQADGGLYTCVAVNHLGEARTSAVLAVLDLEEDSNSTEDESAEPHVSMEMKEQFMPPQGEAINSQPTGRGRAMLSHIPSDGLVVEREMRALGSRAPGLQEPLSPGRGQLDFKTSEATPFVQTQPPHKAQASITKSDVDATIDSTATKIKGTKTAMNGAEVSIKSSKITGSHQSGGLQDPSSIQTPKVSQASSKILDRVRAFEEQSHNSNMPKVSSRLSWGFNRTSSCNSEDETCKAGKFQANTKSDVALKRSFFKQKASSLEEQSTYVQKNFQSKLSEELHRIKKLVGKSNIKKAFSMEQLTQTDKQSSVSTESVPTQVIQKSEETGKHFTNLKAVPDAKERWTTLPKEQSSRLPKINLADKTKQPENETPPEMNENQENNSKPTQLLDGQVLNEKVSFIPGQCSPMLPRTNVSRKWPKSPAQPMVKDGLVQAPQKPPRLLESISTPPTPFKMTIPTIVVENKPVDEELDQKEGQIMRQNRDALDDFHTSVEKSIAEAPMSELPRKDALGTAGSELLQCIIKENTVARAPAESLLIITRPMQDVKVKAGETALLECFIAGSQAVDVDWLANGKLIQPALFDCKMQFDGHRCRLLFKSAHENDSGCYTCKLSTAKEELICTANLLVIPSKEPLFTRKLEVLEAIEGRSAQFDCKVSGCPPPEVTWTHCEKPLVESDNIHILNVNGHHSLLITHVNKESEGLYTAIAQNVHGKAASSAELYVQEPRPAISTHMSRLEKMPSIPEEPEVPEGEVERRTMPDFIKPLSDLEVIEGKEAVLKCRVTGLPYPKITWYHNGKKIESTNDRKMTQYRDVHSLVIQSVCHDHSGVYKCVISNKVGKAACYAHLYVAVSLPEPPDGPPVIESVTGRMILLSWKKPKNLDPSIDPASLMYVVQQQVLGSTQWTTIASSLTDTSYTVTSLSKGVCYSFRVLSTTGKTLSKPSQPTDLVQLVDRGEYFRKAPVIIDKPDIVYAVENQPVTITITINHVQATCTWKRRGVVLVNKLGALEMTTPDDDQHALHIAKVKSTDVGQLIFMANNQYGSDLGTLQLVIAVPPIFETIMEDLDVCVGETCHFAVVVDGKPDPDILWYKDGVLLAESSHLTFVYDDRECSLVVLNAQPEDVGVYTCTAKNLAGSVSCKAELTVHTAQNVEEEEEQMEDEATILRRMRMLTDYYDIHKEIGRGAFSYVKRVKHKNDQSFAAKFISVRAKKKTCALRELALLAELDHKSIVRFHDAFEKRRVVIILTELCHEELLERITKRTTILESEVQSIIRQLLEGIEYLHQNDIIHLDLKPENILMADQKTDQIRICDFGNALKVKPNEELYCKYGIPEFIAPEIVNQSPISKSTDIWPVGVITYLCLTGVSPFAGENDRDTLLNIRNYNVAFEESMFKDLCREAKGFIIKVLVSNKLRPDATECLLHPWFKSLTKGKSINTTLHKQVLARRKWQCSLIRYGSKMVMRSISELLDDSSSHVSLAVPRNLKDGSPPPSSSSDSDEDIDELPFIPMPHTMMFSGSRMSLTEIHEVDDKVIRGSNESYKKNLNQLDDIPESQIIAGQKNEDYLKNPKRTDNCLQRGSSVEVDQVASKTRRGLMRRGSSADSALLLQITPEDNEIKDTTEDSQKHMKKAVSMELPHRSSSPKTAKLSKEDYALKLDLMRQRLLKGGTVNKNMSGLRGPLLETLGVDDERRTSSLDRNFRNARLNASGDSGTFNNDSSEETYQKPAFRKRSSLRDENSESISLHRRSGAPLEIPSSSTGDHNVLKIKSTILDENKANLPPLFPRDISSKPPTPVLENKQVSKEEANSDVLIMNSSRSAFNLEDTEIKVEEMKEQDSVPENMNKSTEFPLDILPHDISSNYCSKLQANGKKASFLTPLPTPVLKISQPNIQPTAGRPGVFASAFSAHQPNLRSDIKNIDSEEIFEARFKKRESSLAHGLKRLTRTKSEESSPVPQRKSDEVVYRPGPVGSPLEFGSTGLKEKSKSVQDLREVDKEVGLGLIGRFSMRARKLQPIDKKEKKEISDSVTNKRQLTWATRRSKSLDKKENFETNKENLEKDTKKIAESPVLAVRRKFESNVSGIFDRVHSRSKDRKDKETKPHIDAEAPNVEKQDMKKINDSPVLALRKKFETKVSGISYRKQSQSEGEGTKFEGQKTPLFSRHHRSQSDGLIHKKMDIPENQLPLQTTTISSKETLNSSSSAHSIESSQTPETEIRSRWDRWGLSRGKRDRTPSNSRAPATPKEDFPPVFHIALKDHVLLEGNPVTLSCLPAGSPEPKILWLKDKKPLKLCDGMNLEACPDGRQLLMIMNISKKDAGIYECVATNNLASVTTSCILTLACIPNCPGTPEIRQIYNNTVLVQWKPSDTKVPCTYTIEKKFDGDDKWLTEATGVTDCFFNSSELPSGSTIRFRVACVNKAGQSPYSNESDGVSIDTKVTPQHQPAKMKTHSPASFPAMTAAVATSAFSLSLPSVFSQSISPTPAQSADVSNTFLEVQSSPKMSTPLDLPKPASSVNTMPPITQTQTVSPRSYTAPPSIGRSISPVPTYVPATCSLAPTPVSPSVIVVSSISPIGEGASSPTPETPTGQAVSSTKSETTLRQGVPQKPYSFLDEKARGRFGVIRDCRENATGKMFIAKIIPYDQQTKQTIIKEYEILKSLRCERIMALHEAYITPRYLVLITEYCSGKEILQNLIDRFCYSEDDVVGFIVQILQGLEYLHNCKILHLDIKPDNIMVTNLNVIKIIDFGSAQRFNPLSLQQCSRYLGTLEYMAPEMLKGDLVGPPADIWSLGVLSYIMLSGRHPFEDKDPQLTEAKIHEAKFDSTKLYPKVSQSASTFLKKILNSYPWCRPTIKDCLNHSWLHDSYLKKLRRQTLTFTTTRLKEFMGEHQRRCAESATKHKVILRVYQGGPSSPASPTKYTTQ.

Residues 27-109 (PPVFLRKLKW…GEARTSAVLA (83 aa)) form the Ig-like 1 domain. Cys-50 and Cys-93 are disulfide-bonded. 2 disordered regions span residues 250–272 (ITGSHQSGGLQDPSSIQTPKVSQ) and 384–467 (LTQT…NSKP). Residues 384-404 (LTQTDKQSSVSTESVPTQVIQ) are compositionally biased toward polar residues. Low complexity predominate over residues 454–464 (PPEMNENQENN). 2 Ig-like domains span residues 613–701 (PAES…EELI) and 714–802 (PLFT…AELY). An intrachain disulfide couples Cys-639 to Cys-691. Positions 815 to 834 (SRLEKMPSIPEEPEVPEGEV) are disordered. Positions 840–930 (PDFIKPLSDL…AACYAHLYVA (91 aa)) constitute an Ig-like 4 domain. An intrachain disulfide couples Cys-861 to Cys-912. Residues 937–1035 (PDGPPVIESV…TDLVQLVDRG (99 aa)) form the Fibronectin type-III 1 domain. One can recognise an Ig-like 5 domain in the interval 1135-1224 (PPIFETIMED…GSVSCKAELT (90 aa)). The region spanning 1255–1505 (YDIHKEIGRG…ATECLLHPWF (251 aa)) is the Protein kinase 1 domain. ATP-binding positions include 1261–1269 (IGRGAFSYV) and Lys-1283. Asp-1372 (proton acceptor) is an active-site residue. Disordered regions lie at residues 1559–1582 (VPRNLKDGSPPPSSSSDSDEDIDE), 1776–1839 (RNFR…STGD), 2017–2058 (LKRL…TGLK), 2163–2189 (VHSRSKDRKDKETKPHIDAEAPNVEKQ), 2211–2254 (SGIS…KMDI), and 2268–2322 (SKET…KEDF). The span at 1786–1795 (SGDSGTFNND) shows a compositional bias: polar residues. Residues 2274–2284 (SSSSAHSIESS) are compositionally biased toward low complexity. Residues 2289–2299 (TEIRSRWDRWG) show a composition bias toward basic and acidic residues. One can recognise an Ig-like 6 domain in the interval 2323–2413 (PPVFHIALKD…ASVTTSCILT (91 aa)). The cysteines at positions 2345 and 2397 are disulfide-linked. In terms of domain architecture, Fibronectin type-III 2 spans 2420–2513 (CPGTPEIRQI…DGVSIDTKVT (94 aa)). 2 disordered regions span residues 2574-2609 (PKMSTPLDLPKPASSVNTMPPITQTQTVSPRSYTAP) and 2648-2676 (GEGASSPTPETPTGQAVSSTKSETTLRQG). Composition is skewed to polar residues over residues 2587–2605 (SSVNTMPPITQTQTVSPRS) and 2652–2674 (SSPTPETPTGQAVSSTKSETTLR). Positions 2682 to 2934 (YSFLDEKARG…IKDCLNHSWL (253 aa)) constitute a Protein kinase 2 domain. Residues 2688-2696 (KARGRFGVI) and Lys-2711 each bind ATP. The Proton acceptor role is filled by Asp-2801.

This sequence belongs to the protein kinase superfamily. CAMK Ser/Thr protein kinase family. May be autophosphorylated. In terms of tissue distribution, preferentially expressed in striated muscle.

Its subcellular location is the nucleus. The enzyme catalyses L-seryl-[protein] + ATP = O-phospho-L-seryl-[protein] + ADP + H(+). The catalysed reaction is L-threonyl-[protein] + ATP = O-phospho-L-threonyl-[protein] + ADP + H(+). This chain is Striated muscle preferentially expressed protein kinase (speg), found in Danio rerio (Zebrafish).